Consider the following 405-residue polypeptide: Argininosuccinate synthase (405 aa).

Residues 10 to 18 and A37 contribute to the ATP site; that span reads AYSGGLDTS. 2 residues coordinate L-citrulline: Y88 and S93. An ATP-binding site is contributed by G118. L-aspartate is bound by residues T120, N124, and D125. Residue N124 participates in L-citrulline binding. R128, S179, S188, E264, and Y276 together coordinate L-citrulline.

This sequence belongs to the argininosuccinate synthase family. Type 1 subfamily. As to quaternary structure, homotetramer.

It localises to the cytoplasm. The enzyme catalyses L-citrulline + L-aspartate + ATP = 2-(N(omega)-L-arginino)succinate + AMP + diphosphate + H(+). The protein operates within amino-acid biosynthesis; L-arginine biosynthesis; L-arginine from L-ornithine and carbamoyl phosphate: step 2/3. The sequence is that of Argininosuccinate synthase from Pseudomonas syringae pv. syringae (strain B728a).